Consider the following 671-residue polypeptide: Acetyl-coenzyme A synthetase 1 (671 aa).

CoA contacts are provided by residues 210-213 and T329; that span reads RGGK. ATP is bound by residues 405 to 407, 429 to 434, D520, and R535; these read GEP and DTYWQT. S543 lines the CoA pocket. R546 serves as a coordination point for ATP. Position 605 (R605) interacts with CoA.

This sequence belongs to the ATP-dependent AMP-binding enzyme family.

It carries out the reaction acetate + ATP + CoA = acetyl-CoA + AMP + diphosphate. The chain is Acetyl-coenzyme A synthetase 1 (ACS1) from Debaryomyces hansenii (strain ATCC 36239 / CBS 767 / BCRC 21394 / JCM 1990 / NBRC 0083 / IGC 2968) (Yeast).